A 309-amino-acid polypeptide reads, in one-letter code: Porphobilinogen deaminase (309 aa).

Residue cysteine 244 is modified to S-(dipyrrolylmethanemethyl)cysteine.

This sequence belongs to the HMBS family. In terms of assembly, monomer. It depends on dipyrromethane as a cofactor.

It carries out the reaction 4 porphobilinogen + H2O = hydroxymethylbilane + 4 NH4(+). The protein operates within porphyrin-containing compound metabolism; protoporphyrin-IX biosynthesis; coproporphyrinogen-III from 5-aminolevulinate: step 2/4. In terms of biological role, tetrapolymerization of the monopyrrole PBG into the hydroxymethylbilane pre-uroporphyrinogen in several discrete steps. The chain is Porphobilinogen deaminase from Listeria monocytogenes serovar 1/2a (strain ATCC BAA-679 / EGD-e).